Consider the following 305-residue polypeptide: uncharacterized protein (305 aa).

The signal sequence occupies residues 1–29 (MKKWFSSISKKKVSFSTLLLLGSGIVLSS). A lipid anchor (N-palmitoyl cysteine) is attached at C30. C30 carries S-diacylglycerol cysteine lipidation. Residues 234 to 265 (FYNPDNSNGSNAPGSNQPNQDSGNNGSTTPAA) form a disordered region. Positions 237-258 (PDNSNGSNAPGSNQPNQDSGNN) are enriched in polar residues.

The protein localises to the cell membrane. This is an uncharacterized protein from Mycoplasma pneumoniae (strain ATCC 29342 / M129 / Subtype 1) (Mycoplasmoides pneumoniae).